A 266-amino-acid chain; its full sequence is Putative pyruvate, phosphate dikinase regulatory protein (266 aa).

Residue 147–154 (GLSRTSKT) coordinates ADP.

It belongs to the pyruvate, phosphate/water dikinase regulatory protein family. PDRP subfamily.

It catalyses the reaction N(tele)-phospho-L-histidyl/L-threonyl-[pyruvate, phosphate dikinase] + ADP = N(tele)-phospho-L-histidyl/O-phospho-L-threonyl-[pyruvate, phosphate dikinase] + AMP + H(+). It carries out the reaction N(tele)-phospho-L-histidyl/O-phospho-L-threonyl-[pyruvate, phosphate dikinase] + phosphate + H(+) = N(tele)-phospho-L-histidyl/L-threonyl-[pyruvate, phosphate dikinase] + diphosphate. Its function is as follows. Bifunctional serine/threonine kinase and phosphorylase involved in the regulation of the pyruvate, phosphate dikinase (PPDK) by catalyzing its phosphorylation/dephosphorylation. The chain is Putative pyruvate, phosphate dikinase regulatory protein from Clostridium perfringens (strain 13 / Type A).